The chain runs to 858 residues: Rho GTPase-activating protein 17 (858 aa).

Residues 14–246 form the BAR domain; the sequence is QTVGRAEKTE…MRAHQDKWAE (233 aa). Positions 252–442 constitute a Rho-GAP domain; that stretch reads TPLEEHLKRS…PIIQHADWFF (191 aa). The span at 459–475 shows a compositional bias: polar residues; it reads TPNSNHSSHTGNDSDSG. The disordered stretch occupies residues 459–482; it reads TPNSNHSSHTGNDSDSGTLERKRP. S484 is subject to Phosphoserine. The tract at residues 516–823 is disordered; the sequence is RKHISPAFQP…VTDTNSRVSE (308 aa). A compositionally biased stretch (polar residues) spans 543–552; that stretch reads PSQSSRADSN. The span at 553-563 shows a compositional bias: low complexity; that stretch reads SVGGPVPSSSG. Phosphoserine is present on S575. The segment covering 592 to 617 has biased composition (polar residues); that stretch reads RNSNQITTVPNQAQTGGNSHQLSVGT. A compositionally biased stretch (pro residues) spans 637–650; it reads APAPPKPGNPPPGH. Positions 653–702 are enriched in low complexity; it reads GQSSPGTGTSPKPSTRSPSPPQQQQQQQQQQQQQQQQQQQQQQQQQQQQQ. 2 positions are modified to phosphoserine: S710 and S712. Composition is skewed to pro residues over residues 716–729 and 738–756; these read IQAP…PPTQ and EPGP…PPPA. T742, T746, and T748 each carry phosphothreonine. An SH3-binding motif is present at residues 742 to 755; the sequence is TPPQTPTPPSTPPP. The residue at position 751 (S751) is a Phosphoserine. T752 carries the phosphothreonine modification. Over residues 757-769 the composition is skewed to polar residues; that stretch reads KQNSSQSETTQLH. Pro residues predominate over residues 784-794; it reads RPSVPPPPNPP. Polar residues predominate over residues 806–823; that stretch reads SVPTASRIVTDTNSRVSE.

As to quaternary structure, component of a complex whose core is composed of ARHGAP17, AMOT, PALS1, PATJ and PARD3/PAR3. Interacts with NHERF1, FNBP1, TRIP10, CAPZA (CAPZA1, CAPZA2 or CAPZA3), CAPZB, CD2AP and SH3KBP1/CIN85. In terms of tissue distribution, highly expressed in brain; neuron-specific (at protein level). Isoform 2, isoform 3 and isoform 4 are predominantly expressed in neuronal tissues and correlate well with the differentiation of neurons, while isoform 1 is strongly expressed in embryonic brain.

The protein localises to the membrane. It is found in the cytoplasm. Its subcellular location is the cell junction. The protein resides in the tight junction. In terms of biological role, rho GTPase-activating protein involved in the maintenance of tight junction by regulating the activity of CDC42, thereby playing a central role in apical polarity of epithelial cells. Specifically acts as a GTPase activator for the CDC42 GTPase by converting it to an inactive GDP-bound state. The complex formed with AMOT acts by regulating the uptake of polarity proteins at tight junctions, possibly by deciding whether tight junction transmembrane proteins are recycled back to the plasma membrane or sent elsewhere. Participates in the Ca(2+)-dependent regulation of exocytosis, possibly by catalyzing GTPase activity of Rho family proteins and by inducing the reorganization of the cortical actin filaments. Acts as a GTPase activator in vitro for RAC1. In Rattus norvegicus (Rat), this protein is Rho GTPase-activating protein 17 (Arhgap17).